The primary structure comprises 46 residues: Protein PsbN (46 aa).

The helical transmembrane segment at 5–27 (TLVTLFVSGLLMSFTGYALYTAF) threads the bilayer.

This sequence belongs to the PsbN family.

It is found in the plastid membrane. Its function is as follows. May play a role in photosystem I and II biogenesis. This is Protein PsbN from Cuscuta obtusiflora (Peruvian dodder).